We begin with the raw amino-acid sequence, 472 residues long: Membrane-bound acylglycerophosphatidylinositol O-acyltransferase MBOAT7 (472 aa).

Residues 1–5 (MSPEE) are Cytoplasmic-facing. Residues 6 to 22 (WTYLVVLLISIPIGFLF) traverse the membrane as a helical segment. Topologically, residues 23–33 (KKAGPGLKRWG) are lumenal. Residues 34–57 (AAAVGLGLTLFTCGPHTLHSLVTI) form a helical membrane-spanning segment. Topologically, residues 58-73 (LGTWALIQAQPCSCHA) are cytoplasmic. The helical transmembrane segment at 74–93 (LALAWTFSYLLFFRALSLLG) threads the bilayer. At 94 to 194 (LPTPTPFTNA…VPSLRPLLRR (101 aa)) the chain is on the lumenal side. The helical transmembrane segment at 195-212 (AWPAPLFGLLFLLSSHLF) threads the bilayer. Over 213–231 (PLEAVREDAFYARPLPARL) the chain is Cytoplasmic. The chain crosses the membrane as a helical span at residues 232 to 261 (FYMIPVFFAFRMRFYVAWIAAECGCIAAGF). The Lumenal portion of the chain corresponds to 262–426 (GAYPVAAKAR…LSLADTLRYW (165 aa)). Asparagine 321 carries an N-linked (GlcNAc...) asparagine glycan. A helical membrane pass occupies residues 427–447 (ASIYFCIHFLALAALGLGLAL). Topologically, residues 448–472 (GGGSPSRRKAASQPTSLAPEKLREE) are cytoplasmic. A disordered region spans residues 453–472 (SRRKAASQPTSLAPEKLREE).

It belongs to the membrane-bound acyltransferase family. Interacts with SPTSSA; the interaction facilitates MBOAT7 location to mitochondria-associated membranes (MAMs). In terms of tissue distribution, overexpressed in metastatic breast and bladder carcinomas relative to normal breast epithelium and urothelium.

Its subcellular location is the endoplasmic reticulum membrane. It catalyses the reaction a 1-acyl-sn-glycero-3-phospho-(1D-myo-inositol) + (5Z,8Z,11Z,14Z)-eicosatetraenoyl-CoA = a 1-acyl-2-(5Z,8Z,11Z,14Z-eicosatetraenoyl)-sn-glycero-3-phospho-(1D-myo-inositol) + CoA. It carries out the reaction (5Z,8Z,11Z,14Z)-eicosatetraenoyl-CoA + 1-hexadecanoyl-sn-glycero-3-phosphocholine = 1-hexadecanoyl-2-(5Z,8Z,11Z,14Z-eicosatetraenoyl)-sn-glycero-3-phosphocholine + CoA. The enzyme catalyses a 1-acyl-sn-glycero-3-phospho-(1D-myo-inositol) + an acyl-CoA = a 1,2-diacyl-sn-glycero-3-phospho-(1D-myo-inositol) + CoA. The catalysed reaction is 1-octadecanoyl-sn-glycero-3-phospho-(1D-myo-inositol) + (5Z,8Z,11Z,14Z)-eicosatetraenoyl-CoA = 1-octadecanoyl-2-(5Z,8Z,11Z,14Z-eicosatetraenoyl)-sn-glycero-3-phospho-(1D-myo-inositol) + CoA. It participates in lipid metabolism; phospholipid metabolism. Activity is inhibited by thimerosal. Acyltransferase which catalyzes the transfer of an acyl group from an acyl-CoA to a lysophosphatidylinositol (1-acylglycerophosphatidylinositol or LPI) leading to the production of a phosphatidylinositol (1,2-diacyl-sn-glycero-3-phosphoinositol or PI) and participates in the reacylation step of the phospholipid remodeling pathway also known as the Lands cycle. Prefers arachidonoyl-CoA as the acyl donor, thus contributing to the regulation of free levels arachidonic acid in cell. In liver, participates in the regulation of triglyceride metabolism through the phosphatidylinositol acyl-chain remodeling regulation. The polypeptide is Membrane-bound acylglycerophosphatidylinositol O-acyltransferase MBOAT7 (Homo sapiens (Human)).